The primary structure comprises 460 residues: Histidinol dehydrogenase (460 aa).

Residues Ser-269, Gln-291, and His-294 each contribute to the substrate site. Gln-291 and His-294 together coordinate Zn(2+). Residues Glu-358 and His-359 each act as proton acceptor in the active site. Substrate contacts are provided by His-359, Asp-392, Glu-446, and His-451. Asp-392 provides a ligand contact to Zn(2+). Position 451 (His-451) interacts with Zn(2+).

Belongs to the histidinol dehydrogenase family. Zn(2+) is required as a cofactor.

The enzyme catalyses L-histidinol + 2 NAD(+) + H2O = L-histidine + 2 NADH + 3 H(+). It functions in the pathway amino-acid biosynthesis; L-histidine biosynthesis; L-histidine from 5-phospho-alpha-D-ribose 1-diphosphate: step 9/9. Its function is as follows. Catalyzes the sequential NAD-dependent oxidations of L-histidinol to L-histidinaldehyde and then to L-histidine. This Rhodopirellula baltica (strain DSM 10527 / NCIMB 13988 / SH1) protein is Histidinol dehydrogenase.